Reading from the N-terminus, the 197-residue chain is MRTATIKRKTKETDIEVTVDLDGTGVANAATGIGFFDHMLDLLAKHSRIDITVKAVGDLHVDFHHTTEDVGIALGQAVKQALGNMAGITRYATVLMPMDETLTRVVIDVSGRPFLVFKADFPRDKIGEFDTELVREWFQAFAMNAGVTLHVETLYGENSHHIAESCFKGLARALRAAVAIDPKTAGEVPSTKGQLGG.

It belongs to the imidazoleglycerol-phosphate dehydratase family.

It localises to the cytoplasm. The enzyme catalyses D-erythro-1-(imidazol-4-yl)glycerol 3-phosphate = 3-(imidazol-4-yl)-2-oxopropyl phosphate + H2O. It functions in the pathway amino-acid biosynthesis; L-histidine biosynthesis; L-histidine from 5-phospho-alpha-D-ribose 1-diphosphate: step 6/9. The protein is Imidazoleglycerol-phosphate dehydratase of Rhodopseudomonas palustris (strain ATCC BAA-98 / CGA009).